The following is a 418-amino-acid chain: Ankyrin repeat domain-containing protein 61 (418 aa).

8 ANK repeats span residues 27–57 (ALHS…NQPL), 74–103 (QPIF…DPEV), 131–160 (TRIQ…QVNA), 166–195 (NKHS…QVNA), 199–228 (SSMT…NVNC), 233–272 (TGNT…QVNA), 276–305 (EGQT…NVNI), and 309–342 (NGES…PLRL).

In Rattus norvegicus (Rat), this protein is Ankyrin repeat domain-containing protein 61 (Ankrd61).